The chain runs to 794 residues: Signal transducer and activator of transcription 5A (794 aa).

Tyr90 is modified (phosphotyrosine). Ser129 is subject to Phosphoserine. One can recognise an SH2 domain in the interval 589–686 (WNDGAILGFV…EVFSKYYTPV (98 aa)). Tyr682 bears the Phosphotyrosine mark. At Tyr694 the chain carries Phosphotyrosine; by JAK2. Positions 765–794 (EELLRRPNGQSGPLSPPPAGLFTPARGSLS) are disordered.

This sequence belongs to the transcription factor STAT family. In terms of assembly, forms a homodimer or a heterodimer with a related family member. Binds NR3C1. Interacts with NCOA1 and SOCS7. Interacts with ERBB4. Interacts with EBF4. Interacts with CD69. In terms of processing, ISGylated. Tyrosine phosphorylated in response to KITLG/SCF, IL2, IL3, IL7, IL15, CSF2/GMCSF, GH1, PRL, EPO and THPO. Activated KIT promotes phosphorylation on tyrosine residues and subsequent translocation to the nucleus. Tyrosine phosphorylated in response to constitutively activated FGFR1, FGFR2, FGFR3 and FGFR4. Tyrosine phosphorylation is required for DNA-binding activity and dimerization. Serine phosphorylation is also required for maximal transcriptional activity. Tyrosine phosphorylated in response to signaling via activated FLT3; wild-type FLT3 results in much weaker phosphorylation than constitutively activated mutant FLT3. Alternatively, can be phosphorylated by JAK2 at Tyr-694. As to expression, found in mammary gland and, in lesser extent, in ovary, thymus, spleen, kidney, lung, muscle and adrenal gland.

The protein resides in the cytoplasm. Its subcellular location is the nucleus. Carries out a dual function: signal transduction and activation of transcription. Mediates cellular responses to the cytokine KITLG/SCF and other growth factors. May mediate cellular responses to activated FGFR1, FGFR2, FGFR3 and FGFR4. Binds to the GAS element and activates PRL-induced transcription. Regulates the expression of milk proteins during lactation. This is Signal transducer and activator of transcription 5A (STAT5A) from Ovis aries (Sheep).